Consider the following 359-residue polypeptide: Ni-sirohydrochlorin a,c-diamide reductive cyclase complex, component CfbD (359 aa).

The protein belongs to the NifD/NifK/NifE/NifN family. In terms of assembly, homodimer or monomer. The Ni-sirohydrochlorin a,c-diamide reductive cyclase complex is composed of a NifH homolog component CfbC and a NifD homolog component CfbD. It depends on [4Fe-4S] cluster as a cofactor.

The enzyme catalyses Ni-sirohydrochlorin a,c-diamide + 3 AH2 + ATP + H2O = 15,17(3)-seco-F430-17(3)-acid + 3 A + ADP + phosphate. In terms of biological role, involved in the biosynthesis of the unique nickel-containing tetrapyrrole coenzyme F430, the prosthetic group of methyl-coenzyme M reductase (MCR), which plays a key role in methanogenesis and anaerobic methane oxidation. Catalyzes both the six-electron reduction of the tetrahydroporphyrin ring system and the gamma-lactamization of the c-acetamide side chain of Ni-sirohydrochlorin a,c-diamide to yield 15,17(3)-seco-F430-17(3)-acid (seco-F430), the last intermediate in the biosynthesis of the coenzyme F430. The sequence is that of Ni-sirohydrochlorin a,c-diamide reductive cyclase complex, component CfbD from Methanothermobacter thermautotrophicus (strain ATCC 29096 / DSM 1053 / JCM 10044 / NBRC 100330 / Delta H) (Methanobacterium thermoautotrophicum).